We begin with the raw amino-acid sequence, 205 residues long: High frequency lysogenization protein HflD homolog (205 aa).

The protein belongs to the HflD family.

Its subcellular location is the cytoplasm. The protein resides in the cell inner membrane. This is High frequency lysogenization protein HflD homolog from Shewanella baltica (strain OS185).